Reading from the N-terminus, the 393-residue chain is Metal tolerance protein A2 (393 aa).

Residues methionine 1–arginine 72 lie on the Cytoplasmic side of the membrane. A helical membrane pass occupies residues lysine 73–isoleucine 93. Over lysine 94–alanine 105 the chain is Vacuolar. A helical transmembrane segment spans residues histidine 106–tryptophan 126. Residues lysine 127–arginine 138 are Cytoplasmic-facing. The helical transmembrane segment at isoleucine 139 to valine 159 threads the bilayer. Residues tyrosine 160–serine 176 are Vacuolar-facing. The helical transmembrane segment at leucine 177 to glycine 197 threads the bilayer. The tract at residues histidine 198 to histidine 233 is required for zinc-binding. The Cytoplasmic portion of the chain corresponds to histidine 198–tyrosine 257. Over residues histidine 202–serine 236 the composition is skewed to basic and acidic residues. Residues histidine 202–glutamine 237 are disordered. A helical transmembrane segment spans residues leucine 258–tryptophan 278. Residues tyrosine 279–lysine 284 are Vacuolar-facing. Residues isoleucine 285 to methionine 305 form a helical membrane-spanning segment. Residues leucine 306–glutamine 393 lie on the Cytoplasmic side of the membrane.

The protein belongs to the cation diffusion facilitator (CDF) transporter (TC 2.A.4) family. SLC30A subfamily.

It is found in the membrane. Involved in sequestration of excess zinc in the cytoplasm into vacuoles to maintain zinc homeostasis. This chain is Metal tolerance protein A2 (MTPA2), found in Arabidopsis thaliana (Mouse-ear cress).